A 140-amino-acid chain; its full sequence is Large ribosomal subunit protein uL16c (140 aa).

This sequence belongs to the universal ribosomal protein uL16 family. In terms of assembly, part of the 50S ribosomal subunit.

It localises to the plastid. The protein resides in the chloroplast. This chain is Large ribosomal subunit protein uL16c, found in Cyanidium caldarium (Red alga).